Here is a 667-residue protein sequence, read N- to C-terminus: Probable potassium transport system protein Kup (667 aa).

The next 12 membrane-spanning stretches (helical) occupy residues 16-36 (GFII…LYTM), 58-78 (VSLI…LIAL), 101-121 (WLII…ALTP), 146-166 (TNVI…QRFG), 167-187 (TGVI…VLGI), 221-241 (IFIL…YSDL), 253-273 (WPFV…WILA), 294-314 (VYLV…LISG), 343-363 (LYIP…VLYF), 373-393 (YGLA…YYLI), 399-419 (PLLA…FFLA), and 424-444 (FMHG…VMVI).

This sequence belongs to the HAK/KUP transporter (TC 2.A.72) family.

The protein resides in the cell membrane. The catalysed reaction is K(+)(in) + H(+)(in) = K(+)(out) + H(+)(out). Transport of potassium into the cell. Likely operates as a K(+):H(+) symporter. The polypeptide is Probable potassium transport system protein Kup (Streptococcus equi subsp. equi (strain 4047)).